The sequence spans 116 residues: Non-specific lipid-transfer protein (116 aa).

Positions 1 to 22 (MSLKLACVVVLCMVVGAPLAQG) are cleaved as a signal peptide. Cystine bridges form between Cys36–Cys52, Cys53–Cys98, and Cys73–Cys112.

Belongs to the plant LTP family.

Plant non-specific lipid-transfer proteins transfer phospholipids as well as galactolipids across membranes. May play a role in wax or cutin deposition in the cell walls of expanding epidermal cells and certain secretory tissues. This is Non-specific lipid-transfer protein from Gossypium hirsutum (Upland cotton).